The sequence spans 534 residues: NAD(P)H-quinone oxidoreductase chain 4 (534 aa).

The next 14 helical transmembrane spans lie at 12-32, 44-64, 94-114, 120-140, 144-164, 176-196, 220-240, 251-271, 285-305, 314-334, 340-360, 384-404, 425-445, and 472-492; these read FPWL…IPFF, FALS…INGF, ISMP…LAAW, PKLF…VFAV, LLFF…LAIW, FIIY…AMGF, ILCY…VPLH, TAPV…YALL, FAPL…LTSF, IAYS…SFSS, AMLQ…LVGA, FALW…SGFV, VIMA…LLSM, and VYII…PRLV.

It belongs to the complex I subunit 4 family.

The protein localises to the cellular thylakoid membrane. It catalyses the reaction a plastoquinone + NADH + (n+1) H(+)(in) = a plastoquinol + NAD(+) + n H(+)(out). It carries out the reaction a plastoquinone + NADPH + (n+1) H(+)(in) = a plastoquinol + NADP(+) + n H(+)(out). Functionally, NDH-1 shuttles electrons from NAD(P)H, via FMN and iron-sulfur (Fe-S) centers, to quinones in the respiratory chain. The immediate electron acceptor for the enzyme in this species is believed to be plastoquinone. Couples the redox reaction to proton translocation (for every two electrons transferred, four hydrogen ions are translocated across the cytoplasmic membrane), and thus conserves the redox energy in a proton gradient. This is NAD(P)H-quinone oxidoreductase chain 4 from Prochlorococcus marinus (strain MIT 9312).